The following is a 460-amino-acid chain: Solute carrier family 52, riboflavin transporter, member 3 (460 aa).

Over 1-6 the chain is Cytoplasmic; the sequence is MAFLTH. A helical membrane pass occupies residues 7–27; the sequence is LLVCVFGMGSWVAINGLWVEL. Topologically, residues 28–37 are extracellular; that stretch reads PLLVTELPEA. Residues 38 to 58 traverse the membrane as a helical segment; the sequence is WYLPSYLTVVIQLANIGPLLV. Residues 59–71 are Cytoplasmic-facing; that stretch reads TLMHRFRPGCLSE. Residues 72 to 92 traverse the membrane as a helical segment; the sequence is VPVIFLILCVGTAACILLAFL. The Extracellular portion of the chain corresponds to 93–105; it reads WNVTSWIQGGQHS. An N-linked (GlcNAc...) asparagine glycan is attached at Asn94. Residues 106–126 traverse the membrane as a helical segment; it reads VAFIVLTFFLALVDCTSSVTF. Residues 127-137 lie on the Cytoplasmic side of the membrane; the sequence is LPFMSQLPTYY. A helical membrane pass occupies residues 138-158; that stretch reads LTTFFIGEGLSGLLPALVALV. Residues 159–211 lie on the Extracellular side of the membrane; that stretch reads QGSGITTCVNVTETPGTTLNTMETPITQGNLSPSLPSPSWHQESRYLAPRFSP. Residue Asn168 is glycosylated (N-linked (GlcNAc...) asparagine). The helical transmembrane segment at 212-232 threads the bilayer; the sequence is LLFFLLLSFLTGCCLVAFFLL. Topologically, residues 233 to 291 are cytoplasmic; sequence QRQPWGRQGSIEDLLHSQVTLHSIRPRDTEDTSSLGAPVSSPGKGSVEASVASLRPAQL. A phosphoserine mark is found at Ser242 and Ser266. The helical transmembrane segment at 292 to 312 threads the bilayer; the sequence is AFIYSVVAFVNALTNGVLPSV. Topologically, residues 313–326 are extracellular; sequence QTYSCLPYGPVAYH. A helical membrane pass occupies residues 327–347; that stretch reads LSATLSSVASPLACFLPIFLP. Over 348 to 350 the chain is Cytoplasmic; sequence NRS. A helical transmembrane segment spans residues 351–371; sequence LLFLGVLTVLGTGFGAYNMAM. Residues 372–387 lie on the Extracellular side of the membrane; that stretch reads AAMSPCPVLQGHWGGE. Cys377 and Cys454 are disulfide-bonded. Residues 388–408 form a helical membrane-spanning segment; it reads VLIVLSWVLFAACLSYVKVML. At 409-418 the chain is on the cytoplasmic side; the sequence is GVILRDRSRS. Residues 419–439 form a helical membrane-spanning segment; sequence ALLWCGAAVQLGSLIGALLMF. Residues 440-460 lie on the Extracellular side of the membrane; sequence PLVNVLKLFSSADYCSLDCSV.

The protein belongs to the riboflavin transporter family. In terms of tissue distribution, within the small intestine, it is particularly expressed in the jujenum and the ileum. Almost negligible expression in the stomach, duodenum, and large intestine.

The protein localises to the cell membrane. It carries out the reaction riboflavin(in) = riboflavin(out). Its function is as follows. Plasma membrane transporter mediating the uptake by cells of the water soluble vitamin B2/riboflavin that plays a key role in biochemical oxidation-reduction reactions of the carbohydrate, lipid, and amino acid metabolism. This is Solute carrier family 52, riboflavin transporter, member 3 (Slc52a3) from Mus musculus (Mouse).